Here is a 300-residue protein sequence, read N- to C-terminus: MLANSLKSFFSSTRKTTQLKNMIQSKDLSFIMEAHNGLSAAIVEETGFKGIWGSGLSISAAMGVRDSNEASYTQVLEVLEFMSDRTKIPILLDGDTGYGNYNNARRLVKKLEQRSIAGVCLEDKIFPKRNSLLDDGRQELAPINEFVAKIKACKDTQQDADFQVVARVEAFIAGWGLEEALKRAEAYRNAGADAILMHSKLKEPSEIEAFMKEWKNRSPVIIVPTNYHTVPTDTFRKWGVNMVIWANHNMRACVSAMQETSRRIYEDESLVNVEPKVAKVKEVFRLQGEDELKQADKKYL.

Residues 1–10 (MLANSLKSFF) constitute a propeptide that is removed on maturation. Asp-66 acts as the Nucleophile in catalysis.

Belongs to the isocitrate lyase/PEP mutase superfamily. PEP mutase family.

The enzyme catalyses phosphoenolpyruvate + H(+) = 3-phosphonopyruvate. It functions in the pathway phosphorus metabolism; phosphonate biosynthesis. Formation of a carbon-phosphorus bond by converting phosphoenolpyruvate (PEP) to phosphonopyruvate (P-Pyr). This is Phosphoenolpyruvate phosphomutase (PEPM) from Tetrahymena pyriformis.